Here is a 200-residue protein sequence, read N- to C-terminus: Beta-1,6-glucan synthesis-associated protein KEG1 (200 aa).

Topologically, residues 1–15 (MAGIKLTHKLYQYYQ) are lumenal. A helical membrane pass occupies residues 16–36 (LATSFLYAALLIRWLILMPLV). Residues 37-44 (GSRFLPGG) lie on the Cytoplasmic side of the membrane. The helical transmembrane segment at 45-65 (IHEFLIYLMFYSSIMEVIWLL) threads the bilayer. At 66–82 (RFHGFKYGLLSRTFLKD) the chain is on the lumenal side. The chain crosses the membrane as a helical span at residues 83–103 (LNFIYLVSVIHFYDDYEHALI). The Cytoplasmic segment spans residues 104 to 145 (LKNASYSSFIISLSLSQAYCHWCKLFKRKGVKERTLVWKVNT). The helical transmembrane segment at 146-166 (FVTLPILYLSEFALLLLNIQV) threads the bilayer. Topologically, residues 167 to 173 (KNYHSTP) are lumenal. The helical transmembrane segment at 174–194 (TLDIINRVVLLAYFPVLLTAY) threads the bilayer. The Cytoplasmic segment spans residues 195–200 (KKLLTK).

As to quaternary structure, interacts with KRE6.

Its subcellular location is the endoplasmic reticulum membrane. Its function is as follows. Involved in the biosynthesis of (1-&gt;6)-beta-D-glucan polymers of the cell wall. Required for viability. Involved in maintaining chromosome stability. This chain is Beta-1,6-glucan synthesis-associated protein KEG1 (KEG1), found in Saccharomyces cerevisiae (strain ATCC 204508 / S288c) (Baker's yeast).